We begin with the raw amino-acid sequence, 293 residues long: MDLLDAWDYFINEVRKFFKEKGYTEVSTPLLLDFPNLDSNVEPVKVEVLERGENKVKWLHTSPEYSMKKLLSRYKRDIFQITKVFRNNEWGRLHRIEFHMLEWYAVGCDYLYLIEELKQLLNKLFGFKEFEVITVEEAFKRHFGEGIPQEESSMKELLERKGIDFSEDEDWETLFYRAFIEVERHLGFNRPTFLINFPERLCALAKVRNGYAERFELFIKGIELANGWTEETNPEEVRKRLEREAKKRNLPLDEDFIKAHEDMPECAGCSLGIDRLFSLFLGKEELVSEFFRA.

Residues 86 to 88 (RNN), 223 to 224 (EL), and Gly-272 each bind ATP.

The protein belongs to the class-II aminoacyl-tRNA synthetase family. EpmA subfamily. As to quaternary structure, homodimer.

This is Elongation factor P--(R)-beta-lysine ligase homolog (genX) from Aquifex aeolicus (strain VF5).